The following is a 79-amino-acid chain: DNA-directed RNA polymerase subunit omega (79 aa).

It belongs to the RNA polymerase subunit omega family. In terms of assembly, the RNAP catalytic core consists of 2 alpha, 1 beta, 1 beta' and 1 omega subunit. When a sigma factor is associated with the core the holoenzyme is formed, which can initiate transcription.

It catalyses the reaction RNA(n) + a ribonucleoside 5'-triphosphate = RNA(n+1) + diphosphate. In terms of biological role, promotes RNA polymerase assembly. Latches the N- and C-terminal regions of the beta' subunit thereby facilitating its interaction with the beta and alpha subunits. The polypeptide is DNA-directed RNA polymerase subunit omega (rpoZ) (Thermotoga maritima (strain ATCC 43589 / DSM 3109 / JCM 10099 / NBRC 100826 / MSB8)).